Reading from the N-terminus, the 330-residue chain is Ig gamma-2A chain C region, A allele (330 aa).

Ig-like domains lie at 6–98, 121–220, and 229–325; these read PSVY…KKIE, PSVF…RTIS, and PQVY…KSFS. 3 cysteine pairs are disulfide-bonded: C27–C82, C144–C204, and C250–C308. N-linked (GlcNAc...) asparagine glycosylation occurs at N180.

The chain is Ig gamma-2A chain C region, A allele (Ighg) from Mus musculus (Mouse).